The sequence spans 32 residues: MSDINATRLPIIGILLPPCIGDDVTLLLTRGE.

A propeptide spanning residues 1–10 is cleaved from the precursor; sequence MSDINATRLP. The cyclopeptide (Ile-Pro) cross-link spans 11-18; the sequence is IIGILLPP. Residues 19-32 constitute a propeptide that is removed on maturation; the sequence is CIGDDVTLLLTRGE.

This sequence belongs to the MSDIN fungal toxin family. In terms of processing, processed by the macrocyclase-peptidase enzyme POPB to yield a toxic cyclic octapeptide. POPB first removes 10 residues from the N-terminus. Conformational trapping of the remaining peptide forces the enzyme to release this intermediate rather than proceed to macrocyclization. The enzyme rebinds the remaining peptide in a different conformation and catalyzes macrocyclization of the N-terminal 8 residues.

Its function is as follows. Probable toxin that belongs to the MSDIN-like toxin family responsible for a large number of food poisoning cases and deaths. The polypeptide is MSDIN-like toxin proprotein a (Amanita phalloides (Death cap)).